The sequence spans 458 residues: Sphingoid long chain base kinase 4 (458 aa).

The DAGKc domain occupies 103 to 241; the sequence is KRSRRFIVFI…FDLMTFEQKG (139 aa). Residues 113 to 115 and threonine 145 contribute to the ATP site; that span reads NPH. 170 to 173 contacts substrate; it reads GGDG. Residue aspartate 172 is the Proton donor/acceptor of the active site. ATP is bound by residues glutamate 177, 202–204, arginine 266, arginine 272, and 426–428; these read GSG and DGE.

The protein localises to the cell membrane. It is found in the endoplasmic reticulum membrane. It localises to the late endosome membrane. The protein resides in the golgi apparatus membrane. It catalyses the reaction a sphingoid base + ATP = a sphingoid 1-phosphate + ADP + H(+). In terms of biological role, catalyzes the phosphorylation of the sphingoid long chain bases dihydrosphingosine (DHS) and phytosphingosine (PHS) to form dihydrosphingosine 1-phosphate (DHS-1P) and phytosphingosine 1-phosphate (PHS-1P) respectively. Involved in the biosynthesis of sphingolipids and ceramides. Involved in heat-induced transient cell cycle arrest. Accumulation of phosphorylated sphingoid long chain bases (LCBPs) stimulates calcium influx and activates calcineurin signaling. Involved in heat-stress resistance. The protein is Sphingoid long chain base kinase 4 (lcb4) of Schizosaccharomyces pombe (strain 972 / ATCC 24843) (Fission yeast).